A 416-amino-acid chain; its full sequence is Cysteate synthase (416 aa).

The residue at position 104 (lysine 104) is an N6-(pyridoxal phosphate)lysine. Residue asparagine 130 coordinates pyridoxal 5'-phosphate.

The protein belongs to the threonine synthase family. Cysteate synthase subfamily. Homotrimer. Requires pyridoxal 5'-phosphate as cofactor.

It carries out the reaction O-phospho-L-serine + sulfite + H(+) = L-cysteate + phosphate. It participates in cofactor biosynthesis; coenzyme M biosynthesis. In terms of biological role, specifically catalyzes the beta-elimination of phosphate from L-phosphoserine and the beta-addition of sulfite to the dehydroalanine intermediate to produce L-cysteate. The sequence is that of Cysteate synthase from Methanosarcina mazei (strain ATCC BAA-159 / DSM 3647 / Goe1 / Go1 / JCM 11833 / OCM 88) (Methanosarcina frisia).